Reading from the N-terminus, the 89-residue chain is Small ribosomal subunit protein uS15 (89 aa).

The protein belongs to the universal ribosomal protein uS15 family. As to quaternary structure, part of the 30S ribosomal subunit. Forms a bridge to the 50S subunit in the 70S ribosome, contacting the 23S rRNA.

One of the primary rRNA binding proteins, it binds directly to 16S rRNA where it helps nucleate assembly of the platform of the 30S subunit by binding and bridging several RNA helices of the 16S rRNA. In terms of biological role, forms an intersubunit bridge (bridge B4) with the 23S rRNA of the 50S subunit in the ribosome. The sequence is that of Small ribosomal subunit protein uS15 from Bacillus anthracis (strain CDC 684 / NRRL 3495).